A 436-amino-acid chain; its full sequence is Phosphatidylinositol transfer protein CSR1 (436 aa).

Residues 85–104 form a disordered region; the sequence is VYDAEKVEDSDAEKEKPTPQ. The segment covering 86–102 has biased composition (basic and acidic residues); it reads YDAEKVEDSDAEKEKPT. The 160-residue stretch at 188–347 folds into the CRAL-TRIO domain; that stretch reads KKGIVKQLEL…ELGGKDEYNF (160 aa).

Belongs to the PITP family. Binds phosphatidylinositol (PtdIns).

The protein localises to the cytoplasm. It localises to the endosome. Functionally, non-classical phosphatidylinositol (PtdIns) transfer protein (PITP), which exhibits PtdIns-binding/transfer activity in the absence of detectable PtdCho-binding/transfer activity. May also regulate post-Golgi membrane-trafficking events and have a role resistance to oxidative stress. The sequence is that of Phosphatidylinositol transfer protein CSR1 (CSR1) from Eremothecium gossypii (strain ATCC 10895 / CBS 109.51 / FGSC 9923 / NRRL Y-1056) (Yeast).